The primary structure comprises 132 residues: MKVQRMAYEMGRYISEEDLAKLIAETSGYPWRWWQQPTLLTPRLWKTLEMLNQIKVHTTKYHNELNRLLKTGKFISDLQLACQAVPRPLTIALFCTLLLWAAEYSFCGEKEETWARCKSAAKVLYSLLQDRV.

The polypeptide is Protein LH2 (Pantherophis guttatus (Corn snake)).